An 84-amino-acid polypeptide reads, in one-letter code: Mitochondrial import inner membrane translocase subunit Tim9 (84 aa).

Residues 36–60 (CFQSCITNFRIRKLDDEEQLCVYKC) carry the Twin CX3C motif motif. 2 disulfides stabilise this stretch: Cys36-Cys60 and Cys40-Cys56.

This sequence belongs to the small Tim family. Heterohexamer; composed of 3 copies of timm9 and 3 copies of timm10, named soluble 70 kDa complex. Associates directly with the TIM22 complex, whose core is composed of timm22. Interacts with the transmembrane regions of multi-pass transmembrane proteins in transit.

Its subcellular location is the mitochondrion inner membrane. Its function is as follows. Component of the TIM22 complex, a complex that mediates the import and insertion of multi-pass transmembrane proteins into the mitochondrial inner membrane. The TIM22 complex forms a twin-pore translocase that uses the membrane potential as external driving force. This is Mitochondrial import inner membrane translocase subunit Tim9 (timm9) from Dictyostelium discoideum (Social amoeba).